Reading from the N-terminus, the 418-residue chain is Tyrosine--tRNA ligase (418 aa).

An L-tyrosine-binding site is contributed by Tyr-34. The 'HIGH' region signature appears at 39–48 (PTADSLHLGH). Residues Tyr-169 and Gln-173 each contribute to the L-tyrosine site. The short motif at 229-233 (KFGKS) is the 'KMSKS' region element. Lys-232 serves as a coordination point for ATP. One can recognise an S4 RNA-binding domain in the interval 352-418 (HNIVELLVTA…GKKKYFVLTY (67 aa)).

This sequence belongs to the class-I aminoacyl-tRNA synthetase family. TyrS type 1 subfamily. As to quaternary structure, homodimer.

It is found in the cytoplasm. The catalysed reaction is tRNA(Tyr) + L-tyrosine + ATP = L-tyrosyl-tRNA(Tyr) + AMP + diphosphate + H(+). Catalyzes the attachment of tyrosine to tRNA(Tyr) in a two-step reaction: tyrosine is first activated by ATP to form Tyr-AMP and then transferred to the acceptor end of tRNA(Tyr). In Streptococcus mutans serotype c (strain ATCC 700610 / UA159), this protein is Tyrosine--tRNA ligase.